Consider the following 93-residue polypeptide: Putative defensin-like protein 282 (93 aa).

Positions 1 to 25 (MANATSFIALAYLLASALMTTVVLG) are cleaved as a signal peptide. Intrachain disulfides connect Cys-51-Cys-83, Cys-66-Cys-90, and Cys-72-Cys-92.

This sequence belongs to the DEFL family.

The protein resides in the secreted. This Arabidopsis thaliana (Mouse-ear cress) protein is Putative defensin-like protein 282.